Consider the following 543-residue polypeptide: Protein lin-9 homolog (543 aa).

Positions 21–82 (REGSLSNTLN…SRSPRRSQRV (62 aa)) are disordered. The segment covering 24-55 (SLSNTLNEKNNLPKSQTTRGRSSYVSMETPTR) has biased composition (polar residues). A coiled-coil region spans residues 355–451 (IKKEHIKHLK…VLRQNNTLAS (97 aa)).

It belongs to the lin-9 family. As to quaternary structure, component of the DREAM complex.

The protein resides in the nucleus. The chain is Protein lin-9 homolog (lin9) from Danio rerio (Zebrafish).